The primary structure comprises 837 residues: Ribosome-releasing factor 2, mitochondrial (837 aa).

The transit peptide at 1–29 (MFSINARTKVPIWVPFIARKGFSMSTRQL) directs the protein to the mitochondrion. Residues 40–331 (LNTRNIGIIA…GVVDYLPSPL (292 aa)) form the tr-type G domain. Residues 49-56 (AHIDAGKT), 113-117 (DTPGH), and 167-170 (NKMD) contribute to the GTP site. The interval 338 to 359 (ITASTSKVSKKQKQKKNSKVSS) is disordered. The segment covering 345-355 (VSKKQKQKKNS) has biased composition (basic residues).

The protein belongs to the TRAFAC class translation factor GTPase superfamily. Classic translation factor GTPase family. EF-G/EF-2 subfamily.

It is found in the mitochondrion. Functionally, mitochondrial GTPase that mediates the disassembly of ribosomes from messenger RNA at the termination of mitochondrial protein biosynthesis. Not involved in the GTP-dependent ribosomal translocation step during translation elongation. This Meyerozyma guilliermondii (strain ATCC 6260 / CBS 566 / DSM 6381 / JCM 1539 / NBRC 10279 / NRRL Y-324) (Yeast) protein is Ribosome-releasing factor 2, mitochondrial.